Reading from the N-terminus, the 412-residue chain is Imidazolonepropionase (412 aa).

Fe(3+) contacts are provided by H76 and H78. 2 residues coordinate Zn(2+): H76 and H78. 4-imidazolone-5-propanoate-binding residues include R85, Y148, and H181. Y148 contributes to the N-formimidoyl-L-glutamate binding site. Residue H242 coordinates Fe(3+). Residue H242 participates in Zn(2+) binding. E245 lines the 4-imidazolone-5-propanoate pocket. D317 provides a ligand contact to Fe(3+). D317 is a Zn(2+) binding site. Residues N319 and G321 each coordinate N-formimidoyl-L-glutamate. Position 322 (S322) interacts with 4-imidazolone-5-propanoate.

Belongs to the metallo-dependent hydrolases superfamily. HutI family. Zn(2+) serves as cofactor. The cofactor is Fe(3+).

It localises to the cytoplasm. It carries out the reaction 4-imidazolone-5-propanoate + H2O = N-formimidoyl-L-glutamate. It participates in amino-acid degradation; L-histidine degradation into L-glutamate; N-formimidoyl-L-glutamate from L-histidine: step 3/3. In terms of biological role, catalyzes the hydrolytic cleavage of the carbon-nitrogen bond in imidazolone-5-propanoate to yield N-formimidoyl-L-glutamate. It is the third step in the universal histidine degradation pathway. The polypeptide is Imidazolonepropionase (Staphylococcus aureus (strain MRSA252)).